We begin with the raw amino-acid sequence, 254 residues long: MPEANTFSDAGPDLWQCLGWQPNENQLSQLKELQALLRHWNSRVNLTRLVENEEFWIAQVFDSLWPLEKELRTPDLTRRCIDVGTGGGFPGLAVAIALPGTSLTLVDSVGRKTAAVESMANALGLGTRVDVRTERVEVTGQKRSCRGTFDLAMARAVATPPVVAEYLVPLLAHQGQALLYRGHWSNDDEANLKRALVPLKAKLADCKQINLPAGRGLRTLIRIESIAPCPKSYPRPVGLPNRLPLGNQADDKRS.

Residues Gly84, Phe89, 136–137 (VE), and Arg155 each bind S-adenosyl-L-methionine.

This sequence belongs to the methyltransferase superfamily. RNA methyltransferase RsmG family.

It is found in the cytoplasm. Specifically methylates the N7 position of a guanine in 16S rRNA. The chain is Ribosomal RNA small subunit methyltransferase G from Synechococcus sp. (strain CC9311).